Here is a 123-residue protein sequence, read N- to C-terminus: Putative outer membrane protein CPn_0818/CP_1053/CPj0818/CpB0847 (123 aa).

An N-terminal signal peptide occupies residues 1–30 (MKRQKRKQSITLIEMMVVITLIGIIGGALA).

It is found in the cell outer membrane. The chain is Putative outer membrane protein CPn_0818/CP_1053/CPj0818/CpB0847 from Chlamydia pneumoniae (Chlamydophila pneumoniae).